We begin with the raw amino-acid sequence, 184 residues long: Chromobox protein homolog hpl-1 (184 aa).

Polar residues predominate over residues 1-13 (MSRQNPVRSTRGN). Disordered stretches follow at residues 1–27 (MSRQ…QDAP) and 87–115 (AAKR…STSD). Residues 37–95 (FVVEKVLNKRLTRGGSEYYIKWQGFPESECSWEPIENLQCDRMIQEYEKEAAKRTTRKR) enclose the Chromo domain. Residues 99–115 (PQPSTSSSAELQPSTSD) show a composition bias toward polar residues.

As to quaternary structure, interacts with histone demethylase spr-5. Interacts with chromobox protein homolog hpl-2. Interacts with histone H3 tails methylated at 'Lys-9' (H3K9me3) and 'Lys-23'(H3K23me2). Interacts with histone H1 variant his-24 (when monomethylated at 'Lys-14'); the interaction is direct. May interact with the REST corepressor rcor-1, histone deacetylase hda-1, and the histone demethylase lsd-1.

Its subcellular location is the nucleus. Seems to be involved in transcriptional silencing in heterochromatin-like complexes. Involved in epigenetic repression. Probably does not act as global transcriptional repressor. Plays a role in linking epigenetic regulation with the innate immune response. Acting in concert with chromobox protein homolog hpl-2 and histone H1 protein his-24, involved in reproduction, somatic gonad development, male tail development and vulval cell fate decisions; perhaps as a result of modulating expression of Hox genes mab-5 and egl-5. Role in growth and somatic gonad development is antagonized by histone-lysine N-methyltransferase set-2/SET1. Required for larval development, acting redundantly with hpl-2. Plays a role in the formation of the vulva and in fertility, acting together with a CoREST-like complex, and hpl-2. The polypeptide is Chromobox protein homolog hpl-1 (Caenorhabditis elegans).